Consider the following 403-residue polypeptide: Ribosomal RNA large subunit methyltransferase I (403 aa).

The region spanning 9 to 88 (YPRLVLSKGR…EPVDIAFFTR (80 aa)) is the PUA domain.

It belongs to the methyltransferase superfamily. RlmI family.

Its subcellular location is the cytoplasm. The catalysed reaction is cytidine(1962) in 23S rRNA + S-adenosyl-L-methionine = 5-methylcytidine(1962) in 23S rRNA + S-adenosyl-L-homocysteine + H(+). Its function is as follows. Specifically methylates the cytosine at position 1962 (m5C1962) of 23S rRNA. This chain is Ribosomal RNA large subunit methyltransferase I, found in Salmonella arizonae (strain ATCC BAA-731 / CDC346-86 / RSK2980).